An 85-amino-acid polypeptide reads, in one-letter code: Cytochrome c2 (85 aa).

Heme c is bound by residues Cys-12, Cys-15, His-16, and Met-61.

It belongs to the cytochrome c family. In terms of processing, binds 1 heme c group covalently per subunit.

Cytochrome c2 is found mainly in purple, non-sulfur, photosynthetic bacteria where it functions as the electron donor to the oxidized bacteriochlorophyll in the photophosphorylation pathway. However, it may also have a role in the respiratory chain and is found in some non-photosynthetic bacteria. This chain is Cytochrome c2, found in Rubrivivax gelatinosus (Rhodocyclus gelatinosus).